We begin with the raw amino-acid sequence, 227 residues long: Urease accessory protein UreF 2 (227 aa).

Belongs to the UreF family. As to quaternary structure, ureD, UreF and UreG form a complex that acts as a GTP-hydrolysis-dependent molecular chaperone, activating the urease apoprotein by helping to assemble the nickel containing metallocenter of UreC. The UreE protein probably delivers the nickel.

The protein localises to the cytoplasm. In terms of biological role, required for maturation of urease via the functional incorporation of the urease nickel metallocenter. The chain is Urease accessory protein UreF 2 from Brucella anthropi (strain ATCC 49188 / DSM 6882 / CCUG 24695 / JCM 21032 / LMG 3331 / NBRC 15819 / NCTC 12168 / Alc 37) (Ochrobactrum anthropi).